We begin with the raw amino-acid sequence, 298 residues long: GTPase Era (298 aa).

The Era-type G domain occupies 7 to 174 (RSGFVSIIGR…VELVRKALPQ (168 aa)). The tract at residues 15–22 (GRPNVGKS) is G1. Residue 15–22 (GRPNVGKS) coordinates GTP. The G2 stretch occupies residues 41–45 (QTTRN). The G3 stretch occupies residues 62 to 65 (DTPG). GTP contacts are provided by residues 62–66 (DTPGI) and 124–127 (NKVD). Residues 124-127 (NKVD) are G4. The interval 153–155 (ISA) is G5. Positions 205-283 (TRDEVPYATA…FLELFVRVRK (79 aa)) constitute a KH type-2 domain.

It belongs to the TRAFAC class TrmE-Era-EngA-EngB-Septin-like GTPase superfamily. Era GTPase family. In terms of assembly, monomer.

The protein localises to the cytoplasm. The protein resides in the cell inner membrane. Functionally, an essential GTPase that binds both GDP and GTP, with rapid nucleotide exchange. Plays a role in 16S rRNA processing and 30S ribosomal subunit biogenesis and possibly also in cell cycle regulation and energy metabolism. The polypeptide is GTPase Era (Geobacter metallireducens (strain ATCC 53774 / DSM 7210 / GS-15)).